Reading from the N-terminus, the 1236-residue chain is Complement factor H (1236 aa).

A signal peptide spans 1–18 (MRFPAKIVWLVLWTVCVA). 20 Sushi domains span residues 19 to 82 (EDCK…ICRK), 83 to 143 (KPCA…ICEV), 144 to 207 (VKCL…KCVE), 208 to 264 (IFCK…TCIE), 265 to 322 (ITCD…RCAW), 325 to 383 (CSYP…EEPC), 385 to 442 (RQCI…RCIR), 444 to 505 (KTCS…VCIK), 507 to 562 (CDRP…KAAC), 565 to 623 (RECS…TCKV), 627 to 685 (KSCA…VCIE), 688 to 745 (RTCG…QCIA), 750 to 804 (RKCK…DCNE), 809 to 866 (QLCP…RCIE), 868 to 936 (IGCS…QCVG), 937 to 994 (LPCG…DCIS), 995 to 1053 (TNCV…ACRD), 1054 to 1111 (VSCG…QCKD), 1114 to 1172 (GKCG…KCLE), and 1173 to 1235 (ACVI…YPRC). 40 disulfides stabilise this stretch: Cys21/Cys66, Cys52/Cys80, Cys85/Cys129, Cys114/Cys141, Cys146/Cys192, Cys178/Cys205, Cys210/Cys251, Cys237/Cys262, Cys267/Cys309, Cys294/Cys320, Cys325/Cys372, Cys355/Cys383, Cys387/Cys429, Cys414/Cys440, Cys446/Cys492, Cys475/Cys503, Cys507/Cys551, Cys534/Cys562, Cys567/Cys609, Cys595/Cys621, Cys629/Cys672, Cys658/Cys683, Cys690/Cys732, Cys718/Cys743, Cys752/Cys791, Cys780/Cys802, Cys811/Cys853, Cys839/Cys864, Cys870/Cys923, Cys909/Cys934, Cys939/Cys981, Cys967/Cys992, Cys997/Cys1040, Cys1026/Cys1051, Cys1056/Cys1098, Cys1084/Cys1109, Cys1116/Cys1159, Cys1145/Cys1170, Cys1174/Cys1225, and Cys1208/Cys1235. A sulfotyrosine mark is found at Tyr168 and Tyr170. Tyr465 and Tyr473 each carry sulfotyrosine. Sulfotyrosine is present on residues Tyr575, Tyr579, and Tyr585. Asn775 carries N-linked (GlcNAc...) asparagine glycosylation. The N-linked (GlcNAc...) asparagine glycan is linked to Asn1100.

As to quaternary structure, homodimer. Also forms homooligomers. Interacts with complement protein C3b; this interaction inhibits complement activation. Interacts with complement protein C3d. Interacts with CR3/ITGAM; this interaction mediates adhesion of neutrophils to pathogens leading to pathogen clearance. Sulfated on tyrosine residues. CFH is one of the most abundant complement components in blood where the liver is the major source of CFH protein in vivo. in addition, CFH is secreted by additional cell types including monocytes, fibroblasts, or endothelial cells.

The protein localises to the secreted. Glycoprotein that plays an essential role in maintaining a well-balanced immune response by modulating complement activation. Acts as a soluble inhibitor of complement, where its binding to self markers such as glycan structures prevents complement activation and amplification on cell surfaces. Accelerates the decay of the complement alternative pathway (AP) C3 convertase C3bBb, thus preventing local formation of more C3b, the central player of the complement amplification loop. As a cofactor of the serine protease factor I, CFH also regulates proteolytic degradation of already-deposited C3b. In addition, mediates several cellular responses through interaction with specific receptors. For example, interacts with CR3/ITGAM receptor and thereby mediates the adhesion of human neutrophils to different pathogens. In turn, these pathogens are phagocytosed and destroyed. This chain is Complement factor H (CFH), found in Bos taurus (Bovine).